The sequence spans 243 residues: Adenylate dimethylallyltransferase (243 aa).

It carries out the reaction dimethylallyl diphosphate + AMP = N(6)-(dimethylallyl)adenosine 5'-phosphate + diphosphate. In terms of biological role, transfers dimethylallyl groups to AMP as part of the biosynthesis of cytokinin phytohormones. The chain is Adenylate dimethylallyltransferase (tzs) from Agrobacterium fabrum (strain C58 / ATCC 33970) (Agrobacterium tumefaciens (strain C58)).